The primary structure comprises 215 residues: Cytochrome b6 (215 aa).

The chain crosses the membrane as a helical span at residues 32–52 (IFYCLGGITLTCFLVQVATGF). A heme c-binding site is contributed by cysteine 35. Positions 86 and 100 each coordinate heme b. The next 3 membrane-spanning stretches (helical) occupy residues 90–110 (ASMM…TGGF), 116–136 (LTWV…VTGY), and 186–206 (LHTF…FLMI). Residues histidine 187 and histidine 202 each coordinate heme b.

It belongs to the cytochrome b family. PetB subfamily. In terms of assembly, the 4 large subunits of the cytochrome b6-f complex are cytochrome b6, subunit IV (17 kDa polypeptide, PetD), cytochrome f and the Rieske protein, while the 4 small subunits are PetG, PetL, PetM and PetN. The complex functions as a dimer. Heme b serves as cofactor. Requires heme c as cofactor.

Its subcellular location is the plastid. It localises to the chloroplast thylakoid membrane. Its function is as follows. Component of the cytochrome b6-f complex, which mediates electron transfer between photosystem II (PSII) and photosystem I (PSI), cyclic electron flow around PSI, and state transitions. The sequence is that of Cytochrome b6 from Nicotiana tabacum (Common tobacco).